The chain runs to 208 residues: Methyl-CpG-binding domain protein 3-like 3 (208 aa).

This sequence belongs to the MBD3L family.

This Homo sapiens (Human) protein is Methyl-CpG-binding domain protein 3-like 3 (MBD3L3).